A 141-amino-acid polypeptide reads, in one-letter code: Nucleoside diphosphate kinase (141 aa).

Residues K11, F59, R87, T93, R104, and N114 each coordinate ATP. The active-site Pros-phosphohistidine intermediate is H117.

The protein belongs to the NDK family. Homotetramer. Mg(2+) serves as cofactor.

The protein resides in the cytoplasm. The catalysed reaction is a 2'-deoxyribonucleoside 5'-diphosphate + ATP = a 2'-deoxyribonucleoside 5'-triphosphate + ADP. It carries out the reaction a ribonucleoside 5'-diphosphate + ATP = a ribonucleoside 5'-triphosphate + ADP. Major role in the synthesis of nucleoside triphosphates other than ATP. The ATP gamma phosphate is transferred to the NDP beta phosphate via a ping-pong mechanism, using a phosphorylated active-site intermediate. In Pseudomonas fluorescens (strain SBW25), this protein is Nucleoside diphosphate kinase.